A 231-amino-acid polypeptide reads, in one-letter code: MAGMVDFQDEEQVKSFLENMEVECNYHCYHEKDPDGCYRLVDYLEGIRKNFDEAAKVLKFNCEENQHSDSCYKLGAYYVTGKGGLTQDLKAAARCFLMACEKPGKKSIAACHNVGLLAHDGQVNEDGQPDLGKARDYYTRACDGGYTSSCFNLSAMFLQGAPGFPKDMDLACKYSMKACDLGHIWACANASRMYKLGDGVDKDEAKAEVLKNRAQQLHKEQQKGVQPLTFG.

At Ala-2 the chain carries N-acetylalanine. Sel1-like repeat units lie at residues 34–66 (PDGCYRLVDYLEGIRKNFDEAAKVLKFNCEENQ), 68–104 (SDSCYKLGAYYVTGKGGLTQDLKAAARCFLMACEKPG), 108–146 (IAACHNVGLLAHDGQVNEDGQPDLGKARDYYTRACDGGY), 147–183 (TSSCFNLSAMFLQGAPGFPKDMDLACKYSMKACDLGH), and 184–219 (IWACANASRMYKLGDGVDKDEAKAEVLKNRAQQLHK).

The protein belongs to the hcp beta-lactamase family. Interacts with CHCHD4/MIA40 through transient intermolecular disulfide bonds.

The protein resides in the mitochondrion intermembrane space. Functionally, required for assembly of mitochondrial respiratory chain complex I and complex IV. This Homo sapiens (Human) protein is Cytochrome c oxidase assembly factor 7 (COA7).